Here is a 636-residue protein sequence, read N- to C-terminus: Ubiquitin-activating enzyme E1-like (636 aa).

ATP is bound by residues 28-33 (GAGGIG), aspartate 52, 60-63 (NLNR), lysine 76, and 121-126 (DNLAAR). Zn(2+)-binding residues include cysteine 162 and cysteine 165. Cysteine 177 (glycyl thioester intermediate) is an active-site residue. The Zn(2+) site is built by cysteine 435 and cysteine 438. The disordered stretch occupies residues 581-636 (DGIVILDDDEGEITIDAEPINGSKKRPVDTEISEAPSNKRTKLVNEPTNSDIVELD). The span at 586 to 595 (LDDDEGEITI) shows a compositional bias: acidic residues. The Nuclear localization signal signature appears at 619-622 (KRTK). The span at 626-636 (EPTNSDIVELD) shows a compositional bias: polar residues.

This sequence belongs to the ubiquitin-activating E1 family. As to quaternary structure, heterodimer of UBA2 and AOS1. The complex binds SMT3. In terms of processing, multiubiquitinated in vivo.

It is found in the nucleus. Its pathway is protein modification; protein sumoylation. Functionally, the dimeric enzyme acts as a SMT3 E1 ligase. It mediates ATP-dependent activation of SMT3 and formation of a thioester with a conserved cysteine residue on AOS1. This chain is Ubiquitin-activating enzyme E1-like (UBA2), found in Saccharomyces cerevisiae (strain ATCC 204508 / S288c) (Baker's yeast).